A 369-amino-acid polypeptide reads, in one-letter code: Leucine-specific-binding protein (369 aa).

The N-terminal stretch at 1-23 (MKRKAKTIIAGIVALAVSQGAMA) is a signal peptide. Cys76 and Cys101 are joined by a disulfide.

Belongs to the leucine-binding protein family.

Its subcellular location is the periplasm. This protein is a component of the leucine-specific transport system, which is one of the two periplasmic binding protein-dependent transport systems of the high-affinity transport of the branched-chain amino acids. In Salmonella typhi, this protein is Leucine-specific-binding protein (livK).